The following is a 199-amino-acid chain: Type II secretion system protein J (199 aa).

Residues 1-7 (MKRTRAG) constitute a propeptide, leader sequence. Phe8 bears the N-methylphenylalanine mark. A helical transmembrane segment spans residues 8–27 (FTLLEMLVAIAIFASLALMA).

This sequence belongs to the GSP J family. Type II secretion is composed of four main components: the outer membrane complex, the inner membrane complex, the cytoplasmic secretion ATPase and the periplasm-spanning pseudopilus. Interacts with core component GspG. Interacts with pseudopilins GspI and GspK. Post-translationally, cleaved by prepilin peptidase. In terms of processing, methylated by prepilin peptidase at the amino group of the N-terminal phenylalanine once the leader sequence is cleaved by prepilin peptidase.

Its subcellular location is the cell inner membrane. Component of the type II secretion system required for the energy-dependent secretion of extracellular factors such as proteases and toxins from the periplasm. Part of the pseudopilus tip complex that is critical for the recognition and binding of secretion substrates. The polypeptide is Type II secretion system protein J (gspJ) (Escherichia coli).